A 534-amino-acid chain; its full sequence is Lysophosphatidylcholine acyltransferase 1 (534 aa).

The tract at residues Met-1 to Arg-22 is disordered. At Met-1–Arg-57 the chain is on the cytoplasmic side. Residues Gly-7 to Arg-22 are compositionally biased toward low complexity. Residues Leu-58–Gly-78 form a helical; Signal-anchor for type II membrane protein membrane-spanning segment. The Lumenal portion of the chain corresponds to Ser-79–Asp-534. An HXXXXD motif motif is present at residues His-135–Asp-140. EF-hand domains follow at residues Pro-379–Pro-414 and Val-451–Phe-486. Asp-392, Ser-394, Ser-396, Glu-398, and Glu-403 together coordinate Ca(2+). The disordered stretch occupies residues Gly-512–Asp-534. Residues Asp-523–Asp-534 are compositionally biased toward basic and acidic residues. The short motif at Lys-531–Asp-534 is the Di-lysine motif element.

This sequence belongs to the 1-acyl-sn-glycerol-3-phosphate acyltransferase family. As to expression, erythrocytes.

The protein localises to the endoplasmic reticulum membrane. The protein resides in the golgi apparatus membrane. It localises to the cell membrane. Its subcellular location is the lipid droplet. The enzyme catalyses a 1-acyl-sn-glycero-3-phosphocholine + an acyl-CoA = a 1,2-diacyl-sn-glycero-3-phosphocholine + CoA. The catalysed reaction is a 1-acyl-sn-glycero-3-phosphate + an acyl-CoA = a 1,2-diacyl-sn-glycero-3-phosphate + CoA. It carries out the reaction a 1-O-alkyl-sn-glycero-3-phosphocholine + acetyl-CoA = a 1-O-alkyl-2-acetyl-sn-glycero-3-phosphocholine + CoA. It catalyses the reaction a 1-O-(1Z-alkenyl)-sn-glycero-3-phosphocholine + an acyl-CoA = a 1-O-(1Z-alkenyl)-2-acyl-sn-glycero-3-phosphocholine + CoA. The enzyme catalyses 1-acyl-sn-glycero-3-phospho-(1'-sn-glycerol) + an acyl-CoA = a 1,2-diacyl-sn-glycero-3-phospho-(1'-sn-glycerol) + CoA. The catalysed reaction is 1-hexadecanoyl-sn-glycero-3-phosphocholine + (9Z)-octadecenoyl-CoA = 1-hexadecanoyl-2-(9Z-octadecenoyl)-sn-glycero-3-phosphocholine + CoA. It carries out the reaction 1-hexadecanoyl-sn-glycero-3-phosphocholine + hexadecanoyl-CoA = 1,2-dihexadecanoyl-sn-glycero-3-phosphocholine + CoA. It catalyses the reaction 1-O-hexadecyl-sn-glycero-3-phosphocholine + hexadecanoyl-CoA = 1-O-hexadecyl-2-hexadecanoyl-sn-glycero-3-phosphocholine + CoA. The enzyme catalyses a 1-O-(1Z-alkenyl)-sn-glycero-3-phosphocholine + hexadecanoyl-CoA = 1-O-(1Z)-alkenyl-2-hexadecanoyl-sn-glycero-3-phosphocholine + CoA. The catalysed reaction is 1-hexadecanoyl-sn-glycero-3-phospho-(1'-sn-glycerol) + hexadecanoyl-CoA = 1,2-dihexadecanoyl-sn-glycero-3-phospho-(1'-sn-glycerol) + CoA. It carries out the reaction 1-dodecanoyl-sn-glycero-3-phosphocholine + hexadecanoyl-CoA = 1-dodecanoyl-2-hexadecanoyl-sn-glycero-3-phosphocholine + CoA. It catalyses the reaction 1-tetradecanoyl-sn-glycero-3-phosphocholine + hexadecanoyl-CoA = 1-tetradecanoyl-2-hexadecanoyl-sn-glycero-3-phosphocholine + CoA. The enzyme catalyses 1-O-octadecyl-sn-glycero-3-phosphocholine + hexadecanoyl-CoA = 1-O-octadecyl-2-hexadecanoyl-sn-glycero-3-phosphocholine + CoA. The catalysed reaction is 1-octadecanoyl-sn-glycero-3-phosphocholine + hexadecanoyl-CoA = 1-octadecanoyl-2-hexadecanoyl-sn-glycero-3-phosphocholine + CoA. It carries out the reaction 1-(9Z-octadecenoyl)-sn-glycero-3-phosphocholine + hexadecanoyl-CoA = 1-(9Z-octadecenoyl)-2-hexadecanoyl-sn-glycero-3-phosphocholine + CoA. It catalyses the reaction 1-eicosanoyl-sn-glycero-3-phosphocholine + hexadecanoyl-CoA = 1-eicosanoyl-2-hexadecanoyl-sn-glycero-3-phosphocholine + CoA. The enzyme catalyses hexanoyl-CoA + 1-hexadecanoyl-sn-glycero-3-phosphocholine = 1-hexadecanoyl-2-hexanoyl-sn-glycero-3-phosphocholine + CoA. The catalysed reaction is octanoyl-CoA + 1-hexadecanoyl-sn-glycero-3-phosphocholine = 1-hexadecanoyl-2-octanoyl-sn-glycero-3-phosphocholine + CoA. It carries out the reaction decanoyl-CoA + 1-hexadecanoyl-sn-glycero-3-phosphocholine = 1-hexadecanoyl-2-decanoyl-sn-glycero-3-phosphocholine + CoA. It catalyses the reaction dodecanoyl-CoA + 1-hexadecanoyl-sn-glycero-3-phosphocholine = 1-hexadecanoyl-2-dodecanoyl-sn-glycero-3-phosphocholine + CoA. The enzyme catalyses tetradecanoyl-CoA + 1-hexadecanoyl-sn-glycero-3-phosphocholine = 1-hexadecanoyl-2-tetradecanoyl-sn-glycero-3-phosphocholine + CoA. The catalysed reaction is (9Z,12Z)-octadecadienoyl-CoA + 1-hexadecanoyl-sn-glycero-3-phosphocholine = 1-hexadecanoyl-2-(9Z,12Z-octadecadienoyl)-sn-glycero-3-phosphocholine + CoA. It carries out the reaction (4Z,7Z,10Z,13Z,16Z,19Z)-docosahexaenoyl-CoA + 1-hexadecanoyl-sn-glycero-3-phosphocholine = 1-hexadecanoyl-2-(4Z,7Z,10Z,13Z,16Z,19Z-docosahexaenoyl)-sn-glycero-3-phosphocholine + CoA. It catalyses the reaction 1-hexadecanoyl-sn-glycero-3-phosphocholine + acetyl-CoA = 1-hexadecanoyl-2-acetyl-sn-glycero-3-phosphocholine + CoA. The enzyme catalyses eicosanoyl-CoA + 1-hexadecanoyl-sn-glycero-3-phosphocholine = 1-hexadecanoyl-2-eicosanoyl-sn-glycero-3-phosphocholine + CoA. The catalysed reaction is 1-O-hexadecyl-sn-glycero-3-phosphocholine + acetyl-CoA = 1-O-hexadecyl-2-acetyl-sn-glycero-3-phosphocholine + CoA. It carries out the reaction a 1-acyl-sn-glycero-3-phosphocholine + hexadecanoyl-CoA = 1-acyl-2-hexadecanoyl-sn-glycero-3-phosphocholine + CoA. It catalyses the reaction a 1-acyl-sn-glycero-3-phosphate + hexadecanoyl-CoA = 1-acyl-2-hexadecanoyl-sn-glycero-3-phosphate + CoA. The enzyme catalyses 1-acyl-sn-glycero-3-phospho-(1'-sn-glycerol) + hexadecanoyl-CoA = 1-acyl-2-hexadecanoyl-sn-glycero-3-phospho-(1'-sn-glycerol) + CoA. It functions in the pathway lipid metabolism; phospholipid metabolism. In terms of biological role, exhibits acyltransferase activity. Exhibits acetyltransferase activity. Activity is calcium-independent. Catalyzes the conversion of lysophosphatidylcholine (1-acyl-sn-glycero-3-phosphocholine or LPC) into phosphatidylcholine (1,2-diacyl-sn-glycero-3-phosphocholine or PC). Catalyzes the conversion 1-acyl-sn-glycerol-3-phosphate (lysophosphatidic acid or LPA) into 1,2-diacyl-sn-glycerol-3-phosphate (phosphatidic acid or PA) by incorporating an acyl moiety at the sn-2 position of the glycerol backbone. Displays a clear preference for saturated fatty acyl-CoAs, and 1-myristoyl or 1-palmitoyl LPC as acyl donors and acceptors, respectively. Involved in platelet-activating factor (PAF) biosynthesis by catalyzing the conversion of the PAF precursor, 1-O-alkyl-sn-glycero-3-phosphocholine (lyso-PAF) into 1-O-alkyl-2-acetyl-sn-glycero-3-phosphocholine (PAF). May synthesize phosphatidylcholine in pulmonary surfactant, thereby playing a pivotal role in respiratory physiology. Involved in the regulation of lipid droplet number and size. The sequence is that of Lysophosphatidylcholine acyltransferase 1 (LPCAT1) from Homo sapiens (Human).